Reading from the N-terminus, the 159-residue chain is Ribosomal RNA large subunit methyltransferase H (159 aa).

S-adenosyl-L-methionine contacts are provided by residues Leu-76, Gly-108, and 127-132 (FSKMTF).

It belongs to the RNA methyltransferase RlmH family. As to quaternary structure, homodimer.

The protein localises to the cytoplasm. The catalysed reaction is pseudouridine(1915) in 23S rRNA + S-adenosyl-L-methionine = N(3)-methylpseudouridine(1915) in 23S rRNA + S-adenosyl-L-homocysteine + H(+). Functionally, specifically methylates the pseudouridine at position 1915 (m3Psi1915) in 23S rRNA. This chain is Ribosomal RNA large subunit methyltransferase H, found in Clostridium botulinum (strain ATCC 19397 / Type A).